The chain runs to 246 residues: MLDQVCQLARNAGDAIMQVYDGAKPMDVVSKADNSPVTAADIAAHTVIMDGLRTLTPDIPVLSEEDPPGWEVRQHWQRYWLVDPLDGTKEFIKRNGEFTVNIALIDHGKPILGVVYAPVMNVMYSAAEGKAWKEECGVRKQIQVRDARPPLVVISRSHADAELKEYLQQLGEHQTTSIGSSLKFCLVAEGQAQLYPRFGPTNIWDTAAGHAVAAAAGAHVHDWQGKPLDYTPRESFLNPGFRVSIY.

Mg(2+) contacts are provided by glutamate 64, aspartate 83, leucine 85, aspartate 86, and aspartate 205. Glutamate 64 contributes to the substrate binding site. Substrate is bound by residues 85 to 88 (LDGT) and aspartate 205.

The protein belongs to the inositol monophosphatase superfamily. CysQ family. Requires Mg(2+) as cofactor.

Its subcellular location is the cell inner membrane. The catalysed reaction is adenosine 3',5'-bisphosphate + H2O = AMP + phosphate. Its function is as follows. Converts adenosine-3',5'-bisphosphate (PAP) to AMP. In Escherichia coli O157:H7, this protein is 3'(2'),5'-bisphosphate nucleotidase CysQ.